The primary structure comprises 673 residues: UvrABC system protein B (673 aa).

Positions 26–414 constitute a Helicase ATP-binding domain; that stretch reads EGLEDGLAHQ…GDEVVDQVVR (389 aa). 39 to 46 is an ATP binding site; it reads GVTGSGKT. The Beta-hairpin signature appears at 92-115; that stretch reads YYDYYQPEAYVPSSDTFIEKDASV. The Helicase C-terminal domain maps to 431–597; it reads QVDDLLSEIR…GLNKKVVDIL (167 aa). Positions 633 to 668 constitute a UVR domain; sequence QQKIHELEEQMMQHAQNLEFEEAAQIRDQLHQLREL.

The protein belongs to the UvrB family. As to quaternary structure, forms a heterotetramer with UvrA during the search for lesions. Interacts with UvrC in an incision complex.

Its subcellular location is the cytoplasm. Functionally, the UvrABC repair system catalyzes the recognition and processing of DNA lesions. A damage recognition complex composed of 2 UvrA and 2 UvrB subunits scans DNA for abnormalities. Upon binding of the UvrA(2)B(2) complex to a putative damaged site, the DNA wraps around one UvrB monomer. DNA wrap is dependent on ATP binding by UvrB and probably causes local melting of the DNA helix, facilitating insertion of UvrB beta-hairpin between the DNA strands. Then UvrB probes one DNA strand for the presence of a lesion. If a lesion is found the UvrA subunits dissociate and the UvrB-DNA preincision complex is formed. This complex is subsequently bound by UvrC and the second UvrB is released. If no lesion is found, the DNA wraps around the other UvrB subunit that will check the other stand for damage. The polypeptide is UvrABC system protein B (Salmonella typhi).